Reading from the N-terminus, the 143-residue chain is Putative pre-16S rRNA nuclease (143 aa).

It belongs to the YqgF nuclease family.

The protein localises to the cytoplasm. In terms of biological role, could be a nuclease involved in processing of the 5'-end of pre-16S rRNA. This chain is Putative pre-16S rRNA nuclease, found in Lactobacillus gasseri (strain ATCC 33323 / DSM 20243 / BCRC 14619 / CIP 102991 / JCM 1131 / KCTC 3163 / NCIMB 11718 / NCTC 13722 / AM63).